The sequence spans 237 residues: MDNGDWGYMMTDPVTLNVGGHLYTTSLTTLTRYPDSMLGAMFGGDFPTARDPQGNYFIDRDGPLFRYVLNFLRTSELTLPLDFKEFDLLRKEADFYQIEPLIQCLNDPKPLYPMDTFEEVVELSSTRKLSKYSNPVAVIITQLTITTKVHSLLEGISNYFTKWNKHMMDTRDCQVSFTFGPCDYHQEVSLRVHLMEYITKQGFTIRNTRVHHMSERANENTVEHNWTFCRLARKTDD.

The segment at 1-104 (MDNGDWGYMM…FYQIEPLIQC (104 aa)) is interaction with ANK1 isoform Mu17. An interaction with CUL3 region spans residues 10 to 110 (MTDPVTLNVG…LIQCLNDPKP (101 aa)). Residues 12–81 (DPVTLNVGGH…LRTSELTLPL (70 aa)) form the BTB domain. The tract at residues 113–187 (PMDTFEEVVE…TFGPCDYHQE (75 aa)) is interaction with USP21.

As to quaternary structure, homopentamer. Interacts with KCTD11; KCTD6 and KCTD11 may associate in pentameric assemblies. Interacts (via BTB domain) with CUL3; initially a 4:4 stoichiometry has been reported, however, electron microscopy revealed pentameric states with a five-pointed pinwheel shape. The interaction with CUL3 is indicative for a participation in a BCR (BTB-CUL3-RBX1) E3 ubiquitin-protein ligase complex. Interacts with HDAC1; probably indirect as the interaction is requires the presence of KCTD11. Interacts with USP21 (preferentially catalytic inactive form). Interacts with ANK1 isoform Mu17; detected in striated muscle. Interacts with USP11. As to expression, highly expressed in cerebellum and brain. Expression is down-regulated in medulloblastoma.

It localises to the cytoplasm. It is found in the myofibril. Its subcellular location is the sarcomere. The protein localises to the m line. Its pathway is protein modification; protein ubiquitination. Probable substrate-specific adapter of a BCR (BTB-CUL3-RBX1) E3 ubiquitin-protein ligase complex mediating the ubiquitination and subsequent proteasomal degradation of target proteins. Promotes the ubiquitination of HDAC1; the function seems to depend on KCTD11:KCTD6 oligomerization. Can function as antagonist of the Hedgehog pathway by affecting the nuclear transfer of transcription factor GLI1; the function probably occurs via HDAC1 down-regulation, keeping GLI1 acetylated and inactive. Inhibits cell growth and tumorigenicity of medulloblastoma (MDB). Involved in regulating protein levels of ANK1 isoform Mu17 probably implicating CUL3-dependent proteasomal degradation. The sequence is that of BTB/POZ domain-containing protein KCTD6 (KCTD6) from Homo sapiens (Human).